The sequence spans 137 residues: Large ribosomal subunit protein eL28 (137 aa).

The residue at position 2 (Ser-2) is an N-acetylserine. Residues Lys-58 and Lys-65 each participate in a glycyl lysine isopeptide (Lys-Gly) (interchain with G-Cter in SUMO2) cross-link. Ser-115 is subject to Phosphoserine.

Belongs to the eukaryotic ribosomal protein eL28 family. Component of the large ribosomal subunit.

The protein resides in the cytoplasm. Component of the large ribosomal subunit. The ribosome is a large ribonucleoprotein complex responsible for the synthesis of proteins in the cell. This Mus musculus (Mouse) protein is Large ribosomal subunit protein eL28 (Rpl28).